A 352-amino-acid polypeptide reads, in one-letter code: Uroporphyrinogen decarboxylase (352 aa).

Substrate contacts are provided by residues 26–30 (RQAGR), Phe-45, Asp-76, Tyr-153, Ser-208, and His-323.

The protein belongs to the uroporphyrinogen decarboxylase family. As to quaternary structure, homodimer.

It localises to the cytoplasm. It catalyses the reaction uroporphyrinogen III + 4 H(+) = coproporphyrinogen III + 4 CO2. It functions in the pathway porphyrin-containing compound metabolism; protoporphyrin-IX biosynthesis; coproporphyrinogen-III from 5-aminolevulinate: step 4/4. Functionally, catalyzes the decarboxylation of four acetate groups of uroporphyrinogen-III to yield coproporphyrinogen-III. This is Uroporphyrinogen decarboxylase from Parasynechococcus marenigrum (strain WH8102).